Consider the following 131-residue polypeptide: Phosphoribosyl-AMP cyclohydrolase (131 aa).

Position 90 (D90) interacts with Mg(2+). Zn(2+) is bound at residue C91. 2 residues coordinate Mg(2+): D92 and D94. Positions 107 and 114 each coordinate Zn(2+).

This sequence belongs to the PRA-CH family. Homodimer. Mg(2+) serves as cofactor. The cofactor is Zn(2+).

It localises to the cytoplasm. It carries out the reaction 1-(5-phospho-beta-D-ribosyl)-5'-AMP + H2O = 1-(5-phospho-beta-D-ribosyl)-5-[(5-phospho-beta-D-ribosylamino)methylideneamino]imidazole-4-carboxamide. The protein operates within amino-acid biosynthesis; L-histidine biosynthesis; L-histidine from 5-phospho-alpha-D-ribose 1-diphosphate: step 3/9. Functionally, catalyzes the hydrolysis of the adenine ring of phosphoribosyl-AMP. This is Phosphoribosyl-AMP cyclohydrolase from Hyphomonas neptunium (strain ATCC 15444).